Consider the following 369-residue polypeptide: Glutamate 5-kinase (369 aa).

Lys9 is a binding site for ATP. Residues Ser49, Asp136, and Asn148 each contribute to the substrate site. Residues 168–169 (TD) and 210–216 (TGGMLTK) each bind ATP. The 81-residue stretch at 275–355 (RGSVYVDEGA…KGVFIHRDDW (81 aa)) folds into the PUA domain.

Belongs to the glutamate 5-kinase family.

It localises to the cytoplasm. It catalyses the reaction L-glutamate + ATP = L-glutamyl 5-phosphate + ADP. It participates in amino-acid biosynthesis; L-proline biosynthesis; L-glutamate 5-semialdehyde from L-glutamate: step 1/2. Catalyzes the transfer of a phosphate group to glutamate to form L-glutamate 5-phosphate. This Neisseria meningitidis serogroup C / serotype 2a (strain ATCC 700532 / DSM 15464 / FAM18) protein is Glutamate 5-kinase.